The sequence spans 301 residues: Glycerol-3-phosphate dehydrogenase [NAD(P)+] (301 aa).

NADPH-binding residues include W13, R33, and K78. The sn-glycerol 3-phosphate site is built by K78 and G106. NADPH is bound at residue A110. 5 residues coordinate sn-glycerol 3-phosphate: K161, D214, S224, R225, and N226. K161 (proton acceptor) is an active-site residue. Residue R225 coordinates NADPH. Residue E251 coordinates NADPH.

The protein belongs to the NAD-dependent glycerol-3-phosphate dehydrogenase family.

The protein localises to the cytoplasm. It catalyses the reaction sn-glycerol 3-phosphate + NAD(+) = dihydroxyacetone phosphate + NADH + H(+). The enzyme catalyses sn-glycerol 3-phosphate + NADP(+) = dihydroxyacetone phosphate + NADPH + H(+). It functions in the pathway membrane lipid metabolism; glycerophospholipid metabolism. Catalyzes the reduction of the glycolytic intermediate dihydroxyacetone phosphate (DHAP) to sn-glycerol 3-phosphate (G3P), the key precursor for phospholipid synthesis. This is Glycerol-3-phosphate dehydrogenase [NAD(P)+] from Synechococcus sp. (strain RCC307).